The primary structure comprises 238 residues: Protein lifeguard 4 (238 aa).

Topologically, residues 1–38 (MADTDPGYPRSSIEDDFNYGSCVASASVHIRMAFLRKV) are cytoplasmic. Residues 39 to 59 (YSILSLQVLLTTVTSALFLYF) form a helical membrane-spanning segment. Residues 60–68 (QALRTFVHE) lie on the Lumenal side of the membrane. The chain crosses the membrane as a helical span at residues 69 to 89 (SPALIVVFALGSLGLIFALTL). At 90 to 97 (HRHTHPLN) the chain is on the cytoplasmic side. Residues 98-118 (LYLLFAFTLSESLAVAAVVTF) traverse the membrane as a helical segment. The Lumenal segment spans residues 119-120 (YD). A helical transmembrane segment spans residues 121-141 (VYLVLQAFIMTTAVFLGLTAY). The Cytoplasmic segment spans residues 142-151 (TLQSKRDFTK). Residues 152-172 (FGAGLFAGLWILCLAGFLKLF) form a helical membrane-spanning segment. Topologically, residues 173–175 (FYS) are lumenal. A helical membrane pass occupies residues 176–196 (ETMELVLASLGALLFCGFIIY). The Cytoplasmic segment spans residues 197-208 (DTHSLMHRLSPE). Positions 209–229 (EYVIAAISLYMDIINLFLHLL) form an intramembrane region, helical. The Cytoplasmic segment spans residues 230 to 238 (KFLEAVNKK).

It belongs to the BI1 family. LFG subfamily. As to quaternary structure, interacts with ITPR3.

The protein resides in the golgi apparatus membrane. Its function is as follows. Anti-apoptotic protein which can inhibit apoptosis induced by intrinsic and extrinsic apoptotic stimuli. Can modulate both capacitative Ca2+ entry and inositol 1,4,5-trisphosphate (IP3)-mediated Ca2+ release. The protein is Protein lifeguard 4 (Tmbim4) of Mus musculus (Mouse).